Consider the following 364-residue polypeptide: DNA polymerase IV (364 aa).

The region spanning 14-198 (IIHIDMDAFF…LPIEKFHGVG (185 aa)) is the UmuC domain. 2 residues coordinate Mg(2+): Asp18 and Asp116. The active site involves Glu117.

This sequence belongs to the DNA polymerase type-Y family. In terms of assembly, monomer. Mg(2+) is required as a cofactor.

The protein localises to the cytoplasm. The enzyme catalyses DNA(n) + a 2'-deoxyribonucleoside 5'-triphosphate = DNA(n+1) + diphosphate. Functionally, poorly processive, error-prone DNA polymerase involved in untargeted mutagenesis. Copies undamaged DNA at stalled replication forks, which arise in vivo from mismatched or misaligned primer ends. These misaligned primers can be extended by PolIV. Exhibits no 3'-5' exonuclease (proofreading) activity. May be involved in translesional synthesis, in conjunction with the beta clamp from PolIII. The sequence is that of DNA polymerase IV from Streptococcus pyogenes serotype M4 (strain MGAS10750).